A 506-amino-acid chain; its full sequence is Cysteine--tRNA ligase (506 aa).

Cysteine 34 contacts Zn(2+). Residues 36–46 carry the 'HIGH' region motif; sequence PTVYDFAHIGN. Positions 230, 269, and 273 each coordinate Zn(2+). The 'KMSKS' region motif lies at 302-306; sequence KMSKS. Position 305 (lysine 305) interacts with ATP.

This sequence belongs to the class-I aminoacyl-tRNA synthetase family. In terms of assembly, monomer. Requires Zn(2+) as cofactor.

The protein localises to the cytoplasm. The enzyme catalyses tRNA(Cys) + L-cysteine + ATP = L-cysteinyl-tRNA(Cys) + AMP + diphosphate. The protein is Cysteine--tRNA ligase of Brucella suis (strain ATCC 23445 / NCTC 10510).